The chain runs to 646 residues: Serine/threonine-protein kinase max-2 (646 aa).

The disordered stretch occupies residues 19–40; that stretch reads FSPSDKDKDRDDEMKPSSSAMD. Over residues 22 to 33 the composition is skewed to basic and acidic residues; that stretch reads SDKDKDRDDEMK. One can recognise a CRIB domain in the interval 41-54; it reads ISQPYNTVHRVHVG. The disordered stretch occupies residues 136 to 345; the sequence is LQCSNGSATS…PPPPEEPPVR (210 aa). 2 stretches are compositionally biased toward low complexity: residues 142–157 and 167–180; these read SATS…SSSA and LSTA…LSLS. Over residues 196-205 the composition is skewed to polar residues; it reads SAPQLKTFTG. Residues 214 to 223 are compositionally biased toward pro residues; sequence SPFPPQPPVL. The segment covering 229-245 has biased composition (low complexity); sequence TASAVATTTTNPTTSNG. Residues 246 to 262 are compositionally biased toward pro residues; that stretch reads APPPVPGSKGPPVPPKP. Low complexity-rich tracts occupy residues 273-307 and 323-334; these read SSGC…DGDV and KNGNTTTNKTTV. Residues 376–627 enclose the Protein kinase domain; sequence YEMKKQIGVG…TTELLAHPFL (252 aa). ATP contacts are provided by residues 382–390 and lysine 405; that span reads IGVGASGTV. The active-site Proton acceptor is the aspartate 496.

Belongs to the protein kinase superfamily. STE Ser/Thr protein kinase family. STE20 subfamily. In terms of assembly, interacts with mlk-1; the interaction is independent of max-2 and mlk-1 kinase activities. Interacts with mig-2 (GTP-bound form). Mg(2+) is required as a cofactor.

The protein localises to the perikaryon. The protein resides in the cell projection. Its subcellular location is the dendrite. It localises to the cytoplasm. It catalyses the reaction L-seryl-[protein] + ATP = O-phospho-L-seryl-[protein] + ADP + H(+). The enzyme catalyses L-threonyl-[protein] + ATP = O-phospho-L-threonyl-[protein] + ADP + H(+). Its function is as follows. Serine/threonine-protein kinase, which phosphorylates mlk-1. Involved in the stress response to heavy metals by activating the mlk-1/mek-1/kgb-1 pathway. In ventral cord commissural motoneurons, required for dorsal axon guidance downstream of unc-6/netrin repulsion receptor unc-5 and probably of Rho GTPases ced-10 and mig-2. Plays a redundant role with mig-10 in orientating axonal growth of HSN neurons. Plays a redundant role with pak-1 in P neuroblast migration and in distal tip cell (DTC)-mediated guidance of gonad elongation probably downstream of Rho GTPases. In association with pak-2, plays a role in embryogenesis. In association with pak-1, may be involved in spermatogenesis. The sequence is that of Serine/threonine-protein kinase max-2 from Caenorhabditis elegans.